The chain runs to 204 residues: Rho GDP-dissociation inhibitor 1 (204 aa).

The segment at 1–36 (MAEQEPTAEQLAQIAAENEEDEHSVNYKPPAQKSIQ) is disordered. Position 2 is an N-acetylalanine (Ala-2). At Ser-34 the chain carries Phosphoserine. Lys-43 carries the post-translational modification N6-acetyllysine. At Ser-47 the chain carries Phosphoserine. N6-acetyllysine occurs at positions 105 and 127. Glycyl lysine isopeptide (Lys-Gly) (interchain with G-Cter in SUMO1); alternate cross-links involve residues Lys-138 and Lys-141. Glycyl lysine isopeptide (Lys-Gly) (interchain with G-Cter in SUMO2); alternate cross-links involve residues Lys-138 and Lys-141. Lys-141 is modified (N6-acetyllysine; alternate). At Lys-141 the chain carries N6-succinyllysine; alternate. Lys-178 is modified (N6-acetyllysine).

It belongs to the Rho GDI family. In terms of assembly, monomer. Interacts with FER. Interacts with PLXNB3. Forms a heterodimer with RAC1. Interacts with RHOA, the affinity is increased by three orders of magnitude when RHOA is prenylated. Interacts with PSMD10; the interaction increases ARHGDIA association with RHOA, leading to ARHGDIA-mediated inactivation of RHOA and ROCK and prolonged AKT activation. Interacts with KANK2; the interaction is direct and may regulate the interaction of ARHGDIA with RHOA, RAC1 and CDC42. Interacts with RHOC. Interacts with CDC42. Interacts with NGFR (via death domain); NGFR binding decreases the affinity for RHOA. In terms of tissue distribution, in kidney glomerulus, expressed in podocytes and mesangial cells.

Its subcellular location is the cytoplasm. Controls Rho proteins homeostasis. Regulates the GDP/GTP exchange reaction of the Rho proteins by inhibiting the dissociation of GDP from them, and the subsequent binding of GTP to them. Retains Rho proteins such as CDC42, RAC1 and RHOA in an inactive cytosolic pool, regulating their stability and protecting them from degradation. Actively involved in the recycling and distribution of activated Rho GTPases in the cell, mediates extraction from membranes of both inactive and activated molecules due its exceptionally high affinity for prenylated forms. Through the modulation of Rho proteins, may play a role in cell motility regulation. In glioma cells, inhibits cell migration and invasion by mediating the signals of SEMA5A and PLXNB3 that lead to inactivation of RAC1. The sequence is that of Rho GDP-dissociation inhibitor 1 (Arhgdia) from Mus musculus (Mouse).